We begin with the raw amino-acid sequence, 163 residues long: Transcriptional repressor NrdR (163 aa).

A zinc finger lies at 3 to 34 (CPFCRHPDSRVVDSRVSDDGSSIRRRRQCPQC). The 91-residue stretch at 46-136 (LTVIKRSGIG…VYQAFESLDD (91 aa)) folds into the ATP-cone domain.

The protein belongs to the NrdR family. The cofactor is Zn(2+).

Functionally, negatively regulates transcription of bacterial ribonucleotide reductase nrd genes and operons by binding to NrdR-boxes. This chain is Transcriptional repressor NrdR, found in Renibacterium salmoninarum (strain ATCC 33209 / DSM 20767 / JCM 11484 / NBRC 15589 / NCIMB 2235).